The sequence spans 248 residues: Inhibitor of growth protein 4 (248 aa).

Residues 25–118 are a coiled coil; sequence FQLMRDLDQR…ADLKEKQIES (94 aa). N6-acetyllysine is present on residues lysine 112, lysine 127, and lysine 129. The interval 115-160 is disordered; that stretch reads QIESSDYDSSSSKGKKSRTQKEKKAARARSKGKNSDEEAPKAAQKK. A Bipartite nuclear localization signal motif is present at residues 127-147; sequence KGKKSRTQKEKKAARARSKGK. Arginine 132 carries the post-translational modification Citrulline. Lysine 145, lysine 147, and lysine 155 each carry N6-acetyllysine. At arginine 165 the chain carries Citrulline. A PHD-type zinc finger spans residues 195-244; the sequence is PTYCLCHQVSYGEMIGCDNPDCSIERFHFACVGLTTKPRGKWFCPRCSQE. Residues cysteine 198, cysteine 200, cysteine 211, cysteine 216, histidine 222, cysteine 225, cysteine 238, and cysteine 241 each contribute to the Zn(2+) site.

The protein belongs to the ING family. As to quaternary structure, homodimer. Component of the HBO1 complex composed of KAT7/HBO1, MEAF6, ING4 or ING5, and one scaffold subunit: complexes containing BRPF scaffold (BRPF1, BRD1/BRPF2 or BRPF3) direct KAT7/HBO1 specificity towards H3K14ac, while complexes containing JADE scaffold (JADE1, JADE2 and JADE3) mediate acetylation of histone H4. Interacts with H3K4me3 and to a lesser extent with H3K4me2, the interaction augments KAT7/HBO1 acetylation activity on H3 tails. Interacts with EP300, RELA and TP53; these interactions may be indirect. Interacts with EGLN1. Interacts with BCL2A1. In terms of processing, citrullination by PADI4 within the nuclear localization signal disrupts the interaction with p53 and increases susceptibility to degradation.

The protein resides in the nucleus. Component of HBO1 complexes, which specifically mediate acetylation of histone H3 at 'Lys-14' (H3K14ac), and have reduced activity toward histone H4. Through chromatin acetylation it may function in DNA replication. May inhibit tumor progression by modulating the transcriptional output of signaling pathways which regulate cell proliferation. Can suppress brain tumor angiogenesis through transcriptional repression of RELA/NFKB3 target genes when complexed with RELA. May also specifically suppress loss of contact inhibition elicited by activated oncogenes such as MYC. Represses hypoxia inducible factor's (HIF) activity by interacting with HIF prolyl hydroxylase 2 (EGLN1). Can enhance apoptosis induced by serum starvation in mammary epithelial cell line HC11. The protein is Inhibitor of growth protein 4 (ING4) of Bos taurus (Bovine).